The chain runs to 92 residues: Elongation factor 1-beta (92 aa).

Belongs to the EF-1-beta/EF-1-delta family.

Promotes the exchange of GDP for GTP in EF-1-alpha/GDP, thus allowing the regeneration of EF-1-alpha/GTP that could then be used to form the ternary complex EF-1-alpha/GTP/AAtRNA. This chain is Elongation factor 1-beta, found in Korarchaeum cryptofilum (strain OPF8).